Consider the following 73-residue polypeptide: MSKKKDVIEMEGTITEPLPNAMFRVQLDNGHEVLAHISGKMRMNYIRILKGDRVLVELSPYDLTRGRITYRYK.

An S1-like domain is found at Met-1–Lys-73.

The protein belongs to the IF-1 family. As to quaternary structure, component of the 30S ribosomal translation pre-initiation complex which assembles on the 30S ribosome in the order IF-2 and IF-3, IF-1 and N-formylmethionyl-tRNA(fMet); mRNA recruitment can occur at any time during PIC assembly.

The protein resides in the cytoplasm. Its function is as follows. One of the essential components for the initiation of protein synthesis. Stabilizes the binding of IF-2 and IF-3 on the 30S subunit to which N-formylmethionyl-tRNA(fMet) subsequently binds. Helps modulate mRNA selection, yielding the 30S pre-initiation complex (PIC). Upon addition of the 50S ribosomal subunit IF-1, IF-2 and IF-3 are released leaving the mature 70S translation initiation complex. The protein is Translation initiation factor IF-1 of Chloroflexus aurantiacus (strain ATCC 29366 / DSM 635 / J-10-fl).